The primary structure comprises 118 residues: IgW heavy chain V region W26 (118 aa).

Positions 1–109 constitute an Ig-like domain; it reads NIVLTQPESA…PQWGYWGSGT (109 aa). C22 and C93 are joined by a disulfide.

In terms of tissue distribution, expressed mainly in lymphoid tissues including spleen, epigonal organ and circulating lymphocytes.

The polypeptide is IgW heavy chain V region W26 (Heterodontus francisci (Horn shark)).